The chain runs to 177 residues: Thymidine kinase (177 aa).

11 to 18 is an ATP binding site; it reads GPMFSGKS. The active-site Proton acceptor is Glu83. Residue Phe113 coordinates substrate. Cys138 and Cys141 together coordinate Zn(2+). 157–161 lines the substrate pocket; sequence IEIIG. Positions 170 and 173 each coordinate Zn(2+).

The protein belongs to the thymidine kinase family. As to quaternary structure, homotetramer. Two molecules of substrate bind to each enzyme tetramer.

It carries out the reaction thymidine + ATP = dTMP + ADP + H(+). Functionally, phosphorylates thymidine and thymidine analogs, such as azidothymidine (AZT). Part of the salvage pathway for pyrimidine deoxyribonucleotide synthesis. The sequence is that of Thymidine kinase (OPG101) from Variola virus (isolate Human/India/Ind3/1967) (VARV).